A 156-amino-acid polypeptide reads, in one-letter code: Ribosome maturation factor RimP (156 aa).

This sequence belongs to the RimP family.

Its subcellular location is the cytoplasm. Functionally, required for maturation of 30S ribosomal subunits. This is Ribosome maturation factor RimP from Bacillus velezensis (strain DSM 23117 / BGSC 10A6 / LMG 26770 / FZB42) (Bacillus amyloliquefaciens subsp. plantarum).